Reading from the N-terminus, the 33-residue chain is Gaegurin-3 (33 aa).

Cys27 and Cys33 form a disulfide bridge.

It belongs to the frog skin active peptide (FSAP) family. Brevinin subfamily. In terms of assembly, monomer. As to expression, expressed by the skin glands.

The protein localises to the secreted. In terms of biological role, has a non-hemolytic activity. Has a broad spectrum of activity against both Gram-positive and Gram-negative bacteria, fungi and protozoa. In Glandirana rugosa (Japanese wrinkled frog), this protein is Gaegurin-3 (GGN3).